A 392-amino-acid chain; its full sequence is Elongation factor Tu 2 (392 aa).

The tr-type G domain maps to 10 to 201 (KPHVNIGTIG…AVDSYIPTPE (192 aa)). Residues 19–26 (GHVDHGKT) are G1. Residue 19–26 (GHVDHGKT) participates in GTP binding. Position 26 (Thr26) interacts with Mg(2+). The G2 stretch occupies residues 55 to 59 (GITIS). Residues 76 to 79 (DCPG) are G3. GTP contacts are provided by residues 76–80 (DCPGH) and 131–134 (NKVD). The segment at 131–134 (NKVD) is G4. Residues 169 to 171 (SAL) are G5.

This sequence belongs to the TRAFAC class translation factor GTPase superfamily. Classic translation factor GTPase family. EF-Tu/EF-1A subfamily. As to quaternary structure, monomer.

The protein resides in the cytoplasm. It carries out the reaction GTP + H2O = GDP + phosphate + H(+). Functionally, GTP hydrolase that promotes the GTP-dependent binding of aminoacyl-tRNA to the A-site of ribosomes during protein biosynthesis. This Rhizobium etli (strain ATCC 51251 / DSM 11541 / JCM 21823 / NBRC 15573 / CFN 42) protein is Elongation factor Tu 2.